The sequence spans 1227 residues: Anion exchange protein 3 (1227 aa).

The span at 1–11 (MANGVIPPPGG) shows a compositional bias: pro residues. Disordered stretches follow at residues 1-256 (MANG…DEAE), 286-312 (KPSR…KKKK), and 428-497 (NDDK…GDGH). Topologically, residues 1–707 (MANGVIPPPG…DLRDALHSQC (707 aa)) are cytoplasmic. Basic and acidic residues predominate over residues 58–75 (DPEKPSRSYSERDFEFHR). 2 stretches are compositionally biased toward basic residues: residues 76-97 (HTSH…KLRR) and 104-113 (RHTRRKRKKE). Over residues 134 to 152 (AEEEEEEEEEEEGESEAEP) the composition is skewed to acidic residues. Phosphoserine occurs at positions 167, 170, 175, and 198. Positions 194–215 (QSDQSPQRSGSSPSPRARASRI) are enriched in low complexity. Residue R294 is modified to Omega-N-methylarginine. Over residues 435 to 448 (FFPRNPSSSSVNSV) the composition is skewed to low complexity. A compositionally biased stretch (basic and acidic residues) spans 480-497 (HDPDAKEKPLHMPGGDGH). The next 4 membrane-spanning stretches (helical) occupy residues 708 to 730 (VAAV…GLLG), 736 to 773 (LMGV…LLVF), 793 to 815 (VWVG…SFLV), and 825 to 846 (IFAF…YKVF). Residues 708 to 1227 (VAAVLFIYFA…DEYNELHMPV (520 aa)) form a membrane (anion exchange) region. N-linked (GlcNAc...) asparagine glycosylation is present at N868. Residues 888-905 (ALLSLILMLGTFLIAFFL) form a helical membrane-spanning segment. The Cytoplasmic segment spans residues 906-920 (RKFRNSRFLGGKARR). 5 helical membrane passes run 921 to 941 (IIGD…DYSI), 975 to 997 (PFPP…LIFM), 1023 to 1044 (LLLI…LTAA), 1078 to 1123 (VTGV…IQLS), and 1150 to 1186 (MHLF…TVPL). Residue C1160 is the site of S-palmitoyl cysteine attachment.

This sequence belongs to the anion exchanger (TC 2.A.31) family. Expressed in the brain.

It localises to the cell membrane. It catalyses the reaction hydrogencarbonate(in) + chloride(out) = hydrogencarbonate(out) + chloride(in). With respect to regulation, inhibited by 4,4'-diisothiocyanatostilbene-2,2'-disulfonic acid (DIDS). In terms of biological role, sodium-independent anion exchanger which mediates the electroneutral exchange of chloride for bicarbonate ions across the cell membrane. May be involved in the regulation of intracellular pH, and the modulation of cardiac action potential. The sequence is that of Anion exchange protein 3 (Slc4a3) from Mus musculus (Mouse).